A 413-amino-acid chain; its full sequence is Imidazolonepropionase (413 aa).

Positions 79 and 81 each coordinate Fe(3+). Zn(2+) contacts are provided by His79 and His81. 4-imidazolone-5-propanoate-binding residues include Arg88, Tyr151, and His184. Tyr151 is a binding site for N-formimidoyl-L-glutamate. A Fe(3+)-binding site is contributed by His248. Residue His248 participates in Zn(2+) binding. Residue Glu251 coordinates 4-imidazolone-5-propanoate. Residue Asp322 participates in Fe(3+) binding. Zn(2+) is bound at residue Asp322. Residues Asn324 and Gly326 each contribute to the N-formimidoyl-L-glutamate site. Ser327 lines the 4-imidazolone-5-propanoate pocket.

Belongs to the metallo-dependent hydrolases superfamily. HutI family. Zn(2+) serves as cofactor. It depends on Fe(3+) as a cofactor.

It localises to the cytoplasm. It catalyses the reaction 4-imidazolone-5-propanoate + H2O = N-formimidoyl-L-glutamate. It participates in amino-acid degradation; L-histidine degradation into L-glutamate; N-formimidoyl-L-glutamate from L-histidine: step 3/3. In terms of biological role, catalyzes the hydrolytic cleavage of the carbon-nitrogen bond in imidazolone-5-propanoate to yield N-formimidoyl-L-glutamate. It is the third step in the universal histidine degradation pathway. The protein is Imidazolonepropionase of Fusobacterium nucleatum subsp. nucleatum (strain ATCC 25586 / DSM 15643 / BCRC 10681 / CIP 101130 / JCM 8532 / KCTC 2640 / LMG 13131 / VPI 4355).